Here is a 372-residue protein sequence, read N- to C-terminus: Probable leucine aminopeptidase MCYG_03459 (372 aa).

An N-terminal signal peptide occupies residues 1 to 18 (MKISTLAVVSAFAVTAIA). An N-linked (GlcNAc...) asparagine glycan is attached at asparagine 95. 2 residues coordinate Zn(2+): histidine 175 and aspartate 194. Residues asparagine 195 and asparagine 219 are each glycosylated (N-linked (GlcNAc...) asparagine). Zn(2+) is bound by residues glutamate 233 and aspartate 260. Cysteine 305 and cysteine 309 are disulfide-bonded. Histidine 338 lines the Zn(2+) pocket.

Belongs to the peptidase M28 family. M28E subfamily. Monomer. Requires Zn(2+) as cofactor.

It is found in the secreted. Its function is as follows. Probable extracellular aminopeptidase which contributes to pathogenicity. This Arthroderma otae (strain ATCC MYA-4605 / CBS 113480) (Microsporum canis) protein is Probable leucine aminopeptidase MCYG_03459.